The sequence spans 1481 residues: Cystic fibrosis transmembrane conductance regulator (1481 aa).

Residues Met-1–Phe-77 lie on the Cytoplasmic side of the membrane. Residues Phe-78–Gln-98 form a helical membrane-spanning segment. The ABC transmembrane type-1 1 domain maps to Phe-81–Leu-365. Over Pro-99–Tyr-122 the chain is Extracellular. A helical transmembrane segment spans residues Leu-123–His-146. At His-147 to Leu-195 the chain is on the cytoplasmic side. The chain crosses the membrane as a helical span at residues Ala-196–Trp-216. Over Asp-217–Ser-222 the chain is Extracellular. Residues Ala-223–Met-243 form a helical membrane-spanning segment. Topologically, residues Met-244–Lys-298 are cytoplasmic. Residues Ala-299–Phe-319 form a helical membrane-spanning segment. Residues Leu-320–Thr-339 are Extracellular-facing. Residues Ile-340 to Val-358 traverse the membrane as a helical segment. The Cytoplasmic segment spans residues Gln-359–Ser-858. ATP contacts are provided by residues Trp-401, Ser-433, Gly-457 to Thr-464, and Gln-492. The ABC transporter 1 domain maps to Asn-422–Gly-645. Cys-523 carries the S-palmitoyl cysteine lipid modification. Phosphoserine occurs at positions 548 and 659. The interval Ser-653–Glu-831 is disordered R region. Ser-669 carries the post-translational modification Phosphoserine; by PKA. Ser-685 bears the Phosphoserine mark. Lys-687 participates in a covalent cross-link: Glycyl lysine isopeptide (Lys-Gly) (interchain with G-Cter in ubiquitin). 2 positions are modified to phosphoserine: Ser-699 and Ser-711. Thr-716 bears the Phosphothreonine mark. Residues Ser-736, Ser-767, Ser-790, Ser-795, and Ser-813 each carry the phosphoserine modification. Residues Leu-859–Val-879 traverse the membrane as a helical segment. The region spanning Leu-859–Ser-1155 is the ABC transmembrane type-1 2 domain. Residues Val-880–Ile-918 are Extracellular-facing. 2 N-linked (GlcNAc...) asparagine glycosylation sites follow: Asn-894 and Asn-900. A discontinuously helical transmembrane segment spans residues Tyr-919–His-939. At Thr-940–Thr-990 the chain is on the cytoplasmic side. A helical membrane pass occupies residues Ile-991–Leu-1011. Over Gln-1012–Pro-1013 the chain is Extracellular. A helical membrane pass occupies residues Tyr-1014–Leu-1034. The Cytoplasmic portion of the chain corresponds to His-1035 to Thr-1095. The chain crosses the membrane as a helical span at residues Leu-1096–Phe-1116. Residues Ile-1117 to Gly-1130 lie on the Extracellular side of the membrane. A helical transmembrane segment spans residues Ile-1131–Ile-1151. Residues Asp-1152 to Leu-1481 are Cytoplasmic-facing. The region spanning Met-1211–Ser-1444 is the ABC transporter 2 domain. ATP contacts are provided by residues Tyr-1220 and Gly-1245–Ser-1252. The interaction with GORASP2 stretch occupies residues Arg-1387–Leu-1481. A lipid anchor (S-palmitoyl cysteine) is attached at Cys-1396. A phosphoserine mark is found at Ser-1445 and Ser-1457. The tract at residues Lys-1449–Leu-1481 is disordered. A compositionally biased stretch (basic residues) spans Phe-1451–Ser-1463. Residues Glu-1470–Leu-1481 show a composition bias toward acidic residues. A PDZ-binding motif is present at residues Thr-1479–Leu-1481.

This sequence belongs to the ABC transporter superfamily. ABCC family. CFTR transporter (TC 3.A.1.202) subfamily. In terms of assembly, monomer; does not require oligomerization for channel activity. May form oligomers in the membrane. Interacts with SLC26A3, SLC26A6 and NHERF1. Interacts with SHANK2. Interacts with MYO6. Interacts (via C-terminus) with GOPC (via PDZ domain); this promotes CFTR internalization and thereby decreases channel activity. Interacts with SLC4A7 through NHERF1. Found in a complex with MYO5B and RAB11A. Interacts with ANO1. Interacts with SLC26A8. Interacts with AHCYL1; the interaction increases CFTR activity. Interacts with CSE1L. The core-glycosylated form interacts with GORASP2 (via PDZ GRASP-type 1 domain) in respone to ER stress. Interacts with MARCHF2; the interaction leads to CFTR ubiqtuitination and degradation. Interacts with ADGRG2. Post-translationally, N-glycosylated. In terms of processing, phosphorylated; cAMP treatment promotes phosphorylation and activates the channel. Dephosphorylation decreases the ATPase activity (in vitro). Phosphorylation at PKA sites activates the channel. Phosphorylation at PKC sites enhances the response to phosphorylation by PKA. Phosphorylated by AMPK; this inhibits channel activity. Ubiquitinated, leading to its degradation in the lysosome. Deubiquitination by USP10 in early endosomes enhances its endocytic recycling to the cell membrane. Ubiquitinated by RNF185 during ER stress. Ubiquitinated by MARCHF2.

Its subcellular location is the apical cell membrane. It localises to the early endosome membrane. It is found in the cell membrane. The protein localises to the recycling endosome membrane. The protein resides in the endoplasmic reticulum membrane. Its subcellular location is the nucleus. The enzyme catalyses ATP + H2O + closed Cl(-) channel = ADP + phosphate + open Cl(-) channel.. It carries out the reaction chloride(in) = chloride(out). It catalyses the reaction hydrogencarbonate(in) = hydrogencarbonate(out). The catalysed reaction is ATP + H2O = ADP + phosphate + H(+). Epithelial ion channel that plays an important role in the regulation of epithelial ion and water transport and fluid homeostasis. Mediates the transport of chloride ions across the cell membrane. Possesses an intrinsic ATPase activity and utilizes ATP to gate its channel; the passive flow of anions through the channel is gated by cycles of ATP binding and hydrolysis by the ATP-binding domains. The ion channel is also permeable to HCO(3)(-); selectivity depends on the extracellular chloride concentration. Exerts its function also by modulating the activity of other ion channels and transporters. Contributes to the regulation of the pH and the ion content of the epithelial fluid layer. Modulates the activity of the epithelial sodium channel (ENaC) complex, in part by regulating the cell surface expression of the ENaC complex. May regulate bicarbonate secretion and salvage in epithelial cells by regulating the transporter SLC4A7. Can inhibit the chloride channel activity of ANO1. Plays a role in the chloride and bicarbonate homeostasis during sperm epididymal maturation and capacitation. The chain is Cystic fibrosis transmembrane conductance regulator from Equus caballus (Horse).